The primary structure comprises 351 residues: MRFKTVDLPYHVYIGENVISKLPKVLRSLDANYFLLLTDEVVKNLVVVNLKETLKDFEYDMMLVESAKMEEARKIVLRGGFADYDAVVGVGGGKVLDVSKVVSSELNASMISVPTTASHDGIASPVASFKENGKPISISTNPPSAVIADLNIIKNCPIRLLRSGYGDLVSNISSVKDWQLARDLVGEDYNEVAASIAVMPAQLMVSKADELDLTLPPHLLMLLRGLIMSGVAIAFVGSSRPASGAEHKFSHALDYLGYGNGTHGEQVALGTIIMEYLHEKYYGRGDWEQIKMSLEKVHAPTTAKEIGLTREQVIEALMLATKLRKKRFTILEAVKPTKEEFELVVEKTGVA.

Residues 93 to 97 (GKVLD) and 115 to 118 (TTAS) contribute to the NAD(+) site. Residue Asp120 participates in substrate binding. Position 124 (Ser124) interacts with NAD(+). Asp167 provides a ligand contact to substrate. 2 residues coordinate Zn(2+): Asp167 and His247. Substrate is bound at residue His251. His263 is a binding site for Zn(2+).

The protein belongs to the glycerol-1-phosphate dehydrogenase family. It depends on Zn(2+) as a cofactor.

The protein resides in the cytoplasm. It carries out the reaction sn-glycerol 1-phosphate + NAD(+) = dihydroxyacetone phosphate + NADH + H(+). It catalyses the reaction sn-glycerol 1-phosphate + NADP(+) = dihydroxyacetone phosphate + NADPH + H(+). It functions in the pathway membrane lipid metabolism; glycerophospholipid metabolism. Functionally, catalyzes the NAD(P)H-dependent reduction of dihydroxyacetonephosphate (DHAP or glycerone phosphate) to glycerol 1-phosphate (G1P). The G1P thus generated is used as the glycerophosphate backbone of phospholipids in the cellular membranes of Archaea. The chain is Glycerol-1-phosphate dehydrogenase [NAD(P)+] from Archaeoglobus fulgidus (strain ATCC 49558 / DSM 4304 / JCM 9628 / NBRC 100126 / VC-16).